The sequence spans 177 residues: Inorganic pyrophosphatase (177 aa).

Substrate is bound by residues lysine 34, arginine 48, and tyrosine 60. Aspartate 70, aspartate 75, and aspartate 107 together coordinate Mg(2+). Tyrosine 144 contributes to the substrate binding site.

The protein belongs to the PPase family. As to quaternary structure, homohexamer. The cofactor is Mg(2+).

The protein localises to the cytoplasm. It carries out the reaction diphosphate + H2O = 2 phosphate + H(+). In terms of biological role, catalyzes the hydrolysis of inorganic pyrophosphate (PPi) forming two phosphate ions. The sequence is that of Inorganic pyrophosphatase from Picrophilus torridus (strain ATCC 700027 / DSM 9790 / JCM 10055 / NBRC 100828 / KAW 2/3).